We begin with the raw amino-acid sequence, 215 residues long: Eukaryotic translation initiation factor 4E-1 (215 aa).

The segment at 1–35 (MAEDTETRPASAGAEEREEGEIADDGDGSAAAAAG) is disordered. A compositionally biased stretch (acidic residues) spans 16–27 (EREEGEIADDGD). 2 EIF4G-binding regions span residues 40 to 43 (HPLE) and 50 to 86 (FDNPQGKSRAVAWGSTIHPIHTFSTVEDFWSLYNNIH). MRNA-binding positions include 58–63 (RAVAWG), K90, and 108–109 (WE). C113 and C151 are disulfide-bonded. Positions 134–143 (HTLLALIGEQ) are EIF4G-binding. Residues 158–163 (RKNQER) and 203–207 (KRSDK) contribute to the mRNA site.

It belongs to the eukaryotic initiation factor 4E family. In terms of assembly, EIF4F is a multi-subunit complex, the composition of which varies with external and internal environmental conditions. It is composed of at least EIF4A, EIF4E and EIF4G. EIF4E is also known to interact with other partners. In higher plants two isoforms of EIF4F have been identified, named isoform EIF4F and isoform EIF(iso)4F. Isoform EIF4F has subunits p220 and p26, whereas isoform EIF(iso)4F has subunits p82 and p28. As to quaternary structure, (Microbial infection) Interacts with potyvirus viral genome-linked protein (VPg); this interaction is possible in susceptible hosts but impaired in resistant plants. According to the redox status, the Cys-113-Cys-151 disulfide bridge may have a role in regulating protein function by affecting its ability to bind capped mRNA.

The protein resides in the nucleus. Its subcellular location is the cytoplasm. Functionally, component of the protein complex eIF4F, which is involved in the recognition of the mRNA cap, ATP-dependent unwinding of 5'-terminal secondary structure and recruitment of mRNA to the ribosome. Recognizes and binds the 7-methylguanosine-containing mRNA cap during an early step in the initiation of protein synthesis and facilitates ribosome binding by inducing the unwinding of the mRNAs secondary structures. Key component of recessive resistance to potyviruses and bymoviruses, including barley yellow mosaic virus and barley mild mosaic virus. In terms of biological role, (Microbial infection) Susceptibility host factor required for viral infection by recruiting viral RNAs to the host ribosomal complex via an interaction with viral genome-linked protein (VPg). The chain is Eukaryotic translation initiation factor 4E-1 from Hordeum vulgare subsp. vulgare (Domesticated barley).